A 393-amino-acid polypeptide reads, in one-letter code: Glutamate 5-kinase 1 (393 aa).

Lys17 serves as a coordination point for ATP. Substrate-binding residues include Ser57, Asp144, and Asn156. Ser176–Asp177 provides a ligand contact to ATP. Positions Ala282–Ala359 constitute a PUA domain.

Belongs to the glutamate 5-kinase family.

The protein resides in the cytoplasm. The catalysed reaction is L-glutamate + ATP = L-glutamyl 5-phosphate + ADP. The protein operates within amino-acid biosynthesis; L-proline biosynthesis; L-glutamate 5-semialdehyde from L-glutamate: step 1/2. Catalyzes the transfer of a phosphate group to glutamate to form L-glutamate 5-phosphate. This chain is Glutamate 5-kinase 1, found in Rhizobium meliloti (strain 1021) (Ensifer meliloti).